A 251-amino-acid polypeptide reads, in one-letter code: Ubiquinone/menaquinone biosynthesis C-methyltransferase UbiE (251 aa).

Residues Thr-74, Asp-95, 123-124, and Ser-140 contribute to the S-adenosyl-L-methionine site; that span reads NA.

This sequence belongs to the class I-like SAM-binding methyltransferase superfamily. MenG/UbiE family.

The enzyme catalyses a 2-demethylmenaquinol + S-adenosyl-L-methionine = a menaquinol + S-adenosyl-L-homocysteine + H(+). The catalysed reaction is a 2-methoxy-6-(all-trans-polyprenyl)benzene-1,4-diol + S-adenosyl-L-methionine = a 5-methoxy-2-methyl-3-(all-trans-polyprenyl)benzene-1,4-diol + S-adenosyl-L-homocysteine + H(+). Its pathway is quinol/quinone metabolism; menaquinone biosynthesis; menaquinol from 1,4-dihydroxy-2-naphthoate: step 2/2. It participates in cofactor biosynthesis; ubiquinone biosynthesis. In terms of biological role, methyltransferase required for the conversion of demethylmenaquinol (DMKH2) to menaquinol (MKH2) and the conversion of 2-polyprenyl-6-methoxy-1,4-benzoquinol (DDMQH2) to 2-polyprenyl-3-methyl-6-methoxy-1,4-benzoquinol (DMQH2). This chain is Ubiquinone/menaquinone biosynthesis C-methyltransferase UbiE, found in Klebsiella pneumoniae subsp. pneumoniae (strain ATCC 700721 / MGH 78578).